We begin with the raw amino-acid sequence, 393 residues long: MATVEEIRKAQRAEGPATVLAIGTANPSNCVDQSAYPDFLFRITTSDHKTELKEKFKHMCEGSMIKKRYLHLTEEILKNNPNICEHKAPSLNARQEIAVAEAPKLGKRAAQKAIEEWSQSKSKITHLVFCTTTSVELPGADYQLTKLLGLSPSVKRSMMYQQGCYGGGTALRLAKDLAENNKGARVLVVCVEITVMSFQAPSRNDTDELDVLVGQALFADGASAVIIGSDPILAIEKPLFELVFATQTLIPDSGHVICANLTEAGLIPHLLKDAPIVISQNIERRLVEVFKPLGISDWNSIFWVAHPGGPAILNQIELKLGLKPEKLRAARHVLSEYGNMSSACVLFVLDEMRKGTIEKGMGTTGEGLEWGLLFGFGPGLTIETVVLHSVSIN.

C164 is a catalytic residue.

Belongs to the thiolase-like superfamily. Chalcone/stilbene synthases family. Expressed in seedlings after illumination with UV light. No expression detectable in flowers. It is not known for sure whether CHSG encodes a chalcone synthase or a very closely related condensing enzyme.

The catalysed reaction is (E)-4-coumaroyl-CoA + 3 malonyl-CoA + 3 H(+) = 2',4,4',6'-tetrahydroxychalcone + 3 CO2 + 4 CoA. The protein operates within secondary metabolite biosynthesis; flavonoid biosynthesis. Functionally, the primary product of this enzyme is 4,2',4',6'-tetrahydroxychalcone (also termed naringenin-chalcone or chalcone) which can under specific conditions spontaneously isomerize into naringenin. The protein is Chalcone synthase G (CHSG) of Petunia hybrida (Petunia).